We begin with the raw amino-acid sequence, 293 residues long: Ribosomal protein L11 methyltransferase (293 aa).

Residues T145, G166, D188, and N230 each contribute to the S-adenosyl-L-methionine site.

Belongs to the methyltransferase superfamily. PrmA family.

The protein resides in the cytoplasm. It carries out the reaction L-lysyl-[protein] + 3 S-adenosyl-L-methionine = N(6),N(6),N(6)-trimethyl-L-lysyl-[protein] + 3 S-adenosyl-L-homocysteine + 3 H(+). Methylates ribosomal protein L11. The protein is Ribosomal protein L11 methyltransferase of Shewanella denitrificans (strain OS217 / ATCC BAA-1090 / DSM 15013).